A 429-amino-acid chain; its full sequence is L-threonine dehydratase biosynthetic IlvA (429 aa).

Lys-66 carries the post-translational modification N6-(pyridoxal phosphate)lysine. Residues Asn-93, 196–200, and Ser-322 each bind pyridoxal 5'-phosphate; that span reads GGGGC. The ACT-like domain maps to 346–420; the sequence is HYFLVDFPQE…TDIHVEALEP (75 aa).

This sequence belongs to the serine/threonine dehydratase family. Homotetramer. Requires pyridoxal 5'-phosphate as cofactor.

It catalyses the reaction L-threonine = 2-oxobutanoate + NH4(+). Its pathway is amino-acid biosynthesis; L-isoleucine biosynthesis; 2-oxobutanoate from L-threonine: step 1/1. Functionally, catalyzes the anaerobic formation of alpha-ketobutyrate and ammonia from threonine in a two-step reaction. The first step involved a dehydration of threonine and a production of enamine intermediates (aminocrotonate), which tautomerizes to its imine form (iminobutyrate). Both intermediates are unstable and short-lived. The second step is the nonenzymatic hydrolysis of the enamine/imine intermediates to form 2-ketobutyrate and free ammonia. In the low water environment of the cell, the second step is accelerated by RidA. In Mycobacterium bovis (strain ATCC BAA-935 / AF2122/97), this protein is L-threonine dehydratase biosynthetic IlvA (ilvA).